Consider the following 888-residue polypeptide: Collagen alpha chain (888 aa).

Residues 1–627 (APGPDGLTGT…GPPGQPGMSE (627 aa)) are disordered. A Collagen-like 1 domain is found at 3-60 (GPDGLTGTKGSMGEPGTDGEPGSPGPQGAKGETGLAGRRGLTGIPGKQGRQGERGEPG). 2 stretches are compositionally biased toward low complexity: residues 59-73 (PGTAGSQGQQGQPGT) and 148-164 (TPGLPGMPGQQGPMGPI). Residues 179–190 (RGYDGKDGEPGR) show a composition bias toward basic and acidic residues. The span at 194 to 203 (PGPIGQPGIP) shows a compositional bias: low complexity. Pro residues predominate over residues 311-320 (SGPPGPPGPS). Residues 422–440 (SGSRGAQGPPGAPGSSGQN) are compositionally biased toward low complexity. Residues 441 to 450 (GVDGGTGENG) are compositionally biased toward gly residues. 2 stretches are compositionally biased toward low complexity: residues 460–475 (ESGAPGDPGASGSAGP) and 508–518 (EPGPQGDQGPK). The Collagen-like 2 domain occupies 513–571 (GDQGPKGQKGEVGPVGEKGDKGWTGTPGDPGPQGDRGEPGPPGRDGVDGPPGPRGAPGE). A compositionally biased stretch (pro residues) spans 610-622 (PPGPPGPPGPPGQ). A Fibrillar collagen NC1 domain is found at 661–884 (ENVLKDLDEK…KLEIGPACFH (224 aa)). 2 disulfides stabilise this stretch: cysteine 731-cysteine 882 and cysteine 793-cysteine 833.

The protein belongs to the fibrillar collagen family. As to expression, component of the acid-insoluble organic matrix of the aragonitic skeleton (at protein level).

The protein localises to the secreted. The polypeptide is Collagen alpha chain (Acropora millepora (Staghorn coral)).